Here is a 201-residue protein sequence, read N- to C-terminus: 3-isopropylmalate dehydratase small subunit (201 aa).

Belongs to the LeuD family. LeuD type 1 subfamily. Heterodimer of LeuC and LeuD.

It catalyses the reaction (2R,3S)-3-isopropylmalate = (2S)-2-isopropylmalate. It participates in amino-acid biosynthesis; L-leucine biosynthesis; L-leucine from 3-methyl-2-oxobutanoate: step 2/4. Catalyzes the isomerization between 2-isopropylmalate and 3-isopropylmalate, via the formation of 2-isopropylmaleate. This is 3-isopropylmalate dehydratase small subunit from Nitrobacter winogradskyi (strain ATCC 25391 / DSM 10237 / CIP 104748 / NCIMB 11846 / Nb-255).